Reading from the N-terminus, the 644-residue chain is Transmembrane 9 superfamily member 9 (644 aa).

A signal peptide spans 1 to 27 (MEFYRSSRRLQILGSVILLLSIHVAHS). Topologically, residues 28–281 (FYLPGVAPQD…YLLMSDNQIH (254 aa)) are lumenal. The chain crosses the membrane as a helical span at residues 282-302 (WFSIVNSLMIVLFLSGMVAMI). At 303–351 (MLRTLYRDISRYNELETQEEAQEETGWKLVHGDVFRPPANSDLLCVYVG) the chain is on the cytoplasmic side. The helical transmembrane segment at 352-372 (TGVQCLGMVLVTMIFAMLGFL) threads the bilayer. At 373 to 377 (SPSNR) the chain is on the lumenal side. The chain crosses the membrane as a helical span at residues 378-398 (GGLMTAMLLLWVFMGLFAGYA). The Cytoplasmic segment spans residues 399–418 (SSRLYKMFKGTEWKRIAFRT). The chain crosses the membrane as a helical span at residues 419 to 439 (AFLFPAVVSAIFFVLNALIWG). Topologically, residues 440–451 (QKSSGAVPFGTM) are lumenal. A helical transmembrane segment spans residues 452–472 (FALIFLWFGISVPLVFVGAYL). Topologically, residues 473 to 501 (GFKKPPLDDPVKTNKIPRQIPEQAWYMNP) are cytoplasmic. Residues 502-522 (IFSILIGGILPFGAVFIELFF) form a helical membrane-spanning segment. Residues 523–534 (ILTSIWLNQFYY) lie on the Lumenal side of the membrane. The helical transmembrane segment at 535 to 555 (IFGFLFLVFVILMVTCAEITI) threads the bilayer. Over 556–573 (VLCYFQLCSEDYLWWWRS) the chain is Cytoplasmic. A helical membrane pass occupies residues 574–594 (YLTSGSSAVYLFLYAAFYFFT). At 595–600 (KLQITK) the chain is on the lumenal side. The helical transmembrane segment at 601–621 (LVSAMLYFGYMLIASYAFFVL) threads the bilayer. At 622 to 644 (TGTIGFYACLWFTRLIYSSVKID) the chain is on the cytoplasmic side. The Endoplasmic reticulum export signal motif lies at 633–638 (FTRLIY). The Golgi retention signal motif lies at 642–644 (KID).

Belongs to the nonaspanin (TM9SF) (TC 9.A.2) family.

The protein localises to the endosome membrane. It localises to the golgi apparatus membrane. The sequence is that of Transmembrane 9 superfamily member 9 from Arabidopsis thaliana (Mouse-ear cress).